Consider the following 404-residue polypeptide: Adenosylhomocysteinase (404 aa).

Positions 114 and 139 each coordinate substrate. 140-142 (TTT) contacts NAD(+). Residues lysine 169 and aspartate 173 each contribute to the substrate site. Residues asparagine 174, 203 to 208 (GYGWCG), glutamate 226, asparagine 261, 282 to 284 (AGH), and asparagine 329 each bind NAD(+).

Belongs to the adenosylhomocysteinase family. The cofactor is NAD(+).

Its subcellular location is the cytoplasm. The enzyme catalyses S-adenosyl-L-homocysteine + H2O = L-homocysteine + adenosine. It participates in amino-acid biosynthesis; L-homocysteine biosynthesis; L-homocysteine from S-adenosyl-L-homocysteine: step 1/1. Functionally, may play a key role in the regulation of the intracellular concentration of adenosylhomocysteine. In Thermotoga maritima (strain ATCC 43589 / DSM 3109 / JCM 10099 / NBRC 100826 / MSB8), this protein is Adenosylhomocysteinase.